The following is a 143-amino-acid chain: Large ribosomal subunit protein uL11 (143 aa).

This sequence belongs to the universal ribosomal protein uL11 family. Part of the ribosomal stalk of the 50S ribosomal subunit. Interacts with L10 and the large rRNA to form the base of the stalk. L10 forms an elongated spine to which L12 dimers bind in a sequential fashion forming a multimeric L10(L12)X complex. Post-translationally, one or more lysine residues are methylated.

Forms part of the ribosomal stalk which helps the ribosome interact with GTP-bound translation factors. The chain is Large ribosomal subunit protein uL11 from Paenarthrobacter aurescens (strain TC1).